Reading from the N-terminus, the 123-residue chain is Large ribosomal subunit protein bL20 (123 aa).

It belongs to the bacterial ribosomal protein bL20 family.

Its function is as follows. Binds directly to 23S ribosomal RNA and is necessary for the in vitro assembly process of the 50S ribosomal subunit. It is not involved in the protein synthesizing functions of that subunit. This chain is Large ribosomal subunit protein bL20 (rplT), found in Chlamydia muridarum (strain MoPn / Nigg).